The following is a 502-amino-acid chain: L-arabinose isomerase (502 aa).

Mn(2+) is bound by residues glutamate 306, glutamate 333, histidine 350, and histidine 449.

Belongs to the arabinose isomerase family. Requires Mn(2+) as cofactor.

The catalysed reaction is beta-L-arabinopyranose = L-ribulose. It participates in carbohydrate degradation; L-arabinose degradation via L-ribulose; D-xylulose 5-phosphate from L-arabinose (bacterial route): step 1/3. Catalyzes the conversion of L-arabinose to L-ribulose. This Flavobacterium johnsoniae (strain ATCC 17061 / DSM 2064 / JCM 8514 / BCRC 14874 / CCUG 350202 / NBRC 14942 / NCIMB 11054 / UW101) (Cytophaga johnsonae) protein is L-arabinose isomerase.